We begin with the raw amino-acid sequence, 607 residues long: UvrABC system protein C (607 aa).

The GIY-YIG domain maps to 16-94 (GRPGVYRMFD…IKEWRPPYNI (79 aa)). The UVR domain occupies 203-238 (QQLGNELNAEMEKAAMALNFEKAAELRDQIALLRRV).

It belongs to the UvrC family. As to quaternary structure, interacts with UvrB in an incision complex.

The protein resides in the cytoplasm. Functionally, the UvrABC repair system catalyzes the recognition and processing of DNA lesions. UvrC both incises the 5' and 3' sides of the lesion. The N-terminal half is responsible for the 3' incision and the C-terminal half is responsible for the 5' incision. The protein is UvrABC system protein C of Pseudomonas entomophila (strain L48).